A 334-amino-acid polypeptide reads, in one-letter code: MTKVYYDETVTQDALQGKKIAVIGYGSQGHAHAQNLKDNGYDVVIGLRPGRSFNKAKEDGFDVYTVSEATQQADVVMVLLPDEIQGEVYNKEIKPYLEKGNALAFAHGFNIHFSVIEPPSDVDVFLVAPKGPGHLVRRTFVEGSAVPALFGVQQDATGQARNIALSYAKGIGATRAGVIETTFKEETETDLFGEQAVLCGGVSKLIQSGFETLVEAGYQPELAYFEVLHEMKLIVDLMYEGGMENVRYSISNTAEFGDYVSGPRVITPNVKENMKKVLEDIQNGNFSRRFVEDNKNGFKEFYQLREDQHGHQIEQVGRELREMMPFIKSKSIEK.

The KARI N-terminal Rossmann domain maps to 2–181; the sequence is TKVYYDETVT…GATRAGVIET (180 aa). Residues 25 to 28, Arg-48, Ser-52, and 82 to 85 each bind NADP(+); these read YGSQ and DEIQ. His-107 is a catalytic residue. NADP(+) is bound at residue Gly-133. A KARI C-terminal knotted domain is found at 182-327; that stretch reads TFKEETETDL…RELREMMPFI (146 aa). Mg(2+) is bound by residues Asp-190, Glu-194, Glu-226, and Glu-230. Ser-251 is a binding site for substrate.

The protein belongs to the ketol-acid reductoisomerase family. Mg(2+) is required as a cofactor.

It catalyses the reaction (2R)-2,3-dihydroxy-3-methylbutanoate + NADP(+) = (2S)-2-acetolactate + NADPH + H(+). It carries out the reaction (2R,3R)-2,3-dihydroxy-3-methylpentanoate + NADP(+) = (S)-2-ethyl-2-hydroxy-3-oxobutanoate + NADPH + H(+). It participates in amino-acid biosynthesis; L-isoleucine biosynthesis; L-isoleucine from 2-oxobutanoate: step 2/4. The protein operates within amino-acid biosynthesis; L-valine biosynthesis; L-valine from pyruvate: step 2/4. Functionally, involved in the biosynthesis of branched-chain amino acids (BCAA). Catalyzes an alkyl-migration followed by a ketol-acid reduction of (S)-2-acetolactate (S2AL) to yield (R)-2,3-dihydroxy-isovalerate. In the isomerase reaction, S2AL is rearranged via a Mg-dependent methyl migration to produce 3-hydroxy-3-methyl-2-ketobutyrate (HMKB). In the reductase reaction, this 2-ketoacid undergoes a metal-dependent reduction by NADPH to yield (R)-2,3-dihydroxy-isovalerate. This chain is Ketol-acid reductoisomerase (NADP(+)), found in Staphylococcus epidermidis (strain ATCC 35984 / DSM 28319 / BCRC 17069 / CCUG 31568 / BM 3577 / RP62A).